Reading from the N-terminus, the 467-residue chain is Light-independent protochlorophyllide reductase subunit N (467 aa).

Positions 22, 47, and 107 each coordinate [4Fe-4S] cluster.

It belongs to the BchN/ChlN family. Protochlorophyllide reductase is composed of three subunits; ChlL, ChlN and ChlB. Forms a heterotetramer of two ChlB and two ChlN subunits. Requires [4Fe-4S] cluster as cofactor.

The protein resides in the plastid. It is found in the chloroplast. It catalyses the reaction chlorophyllide a + oxidized 2[4Fe-4S]-[ferredoxin] + 2 ADP + 2 phosphate = protochlorophyllide a + reduced 2[4Fe-4S]-[ferredoxin] + 2 ATP + 2 H2O. It functions in the pathway porphyrin-containing compound metabolism; chlorophyll biosynthesis (light-independent). Component of the dark-operative protochlorophyllide reductase (DPOR) that uses Mg-ATP and reduced ferredoxin to reduce ring D of protochlorophyllide (Pchlide) to form chlorophyllide a (Chlide). This reaction is light-independent. The NB-protein (ChlN-ChlB) is the catalytic component of the complex. The chain is Light-independent protochlorophyllide reductase subunit N from Chara vulgaris (Common stonewort).